A 297-amino-acid chain; its full sequence is 4-hydroxy-tetrahydrodipicolinate synthase (297 aa).

Residue threonine 49 coordinates pyruvate. The active-site Proton donor/acceptor is the tyrosine 137. The active-site Schiff-base intermediate with substrate is lysine 166. Isoleucine 208 serves as a coordination point for pyruvate.

Belongs to the DapA family. In terms of assembly, homotetramer; dimer of dimers.

It is found in the cytoplasm. It catalyses the reaction L-aspartate 4-semialdehyde + pyruvate = (2S,4S)-4-hydroxy-2,3,4,5-tetrahydrodipicolinate + H2O + H(+). Its pathway is amino-acid biosynthesis; L-lysine biosynthesis via DAP pathway; (S)-tetrahydrodipicolinate from L-aspartate: step 3/4. Catalyzes the condensation of (S)-aspartate-beta-semialdehyde [(S)-ASA] and pyruvate to 4-hydroxy-tetrahydrodipicolinate (HTPA). The polypeptide is 4-hydroxy-tetrahydrodipicolinate synthase (Phocaeicola vulgatus (strain ATCC 8482 / DSM 1447 / JCM 5826 / CCUG 4940 / NBRC 14291 / NCTC 11154) (Bacteroides vulgatus)).